A 175-amino-acid polypeptide reads, in one-letter code: Zinc finger A20 and AN1 domain-containing stress-associated protein 7 (175 aa).

An A20-type zinc finger spans residues 13–47; sequence PTEPKLCDNGCGFFGSPSNMNLCSKCYRSLRAEED. Zn(2+) contacts are provided by Cys-19, Cys-23, Cys-35, Cys-38, Cys-116, Cys-119, Cys-130, Cys-132, Cys-137, His-140, His-146, and Cys-148. Residues 110–156 form an AN1-type zinc finger; it reads VRPNNRCFSCNKKVGVMGFKCKCGSTFCGSHRYPEKHECSFDFKEVG.

May be involved in environmental stress response. This is Zinc finger A20 and AN1 domain-containing stress-associated protein 7 (SAP7) from Arabidopsis thaliana (Mouse-ear cress).